A 796-amino-acid chain; its full sequence is Choline transporter-like 2 (796 aa).

N-linked (GlcNAc...) asparagine glycosylation is present at Asn-20. Residues 35–55 form a helical membrane-spanning segment; that stretch reads PCLLLFVLFLGGWAFIAQYAI. Asn-209 and Asn-284 each carry an N-linked (GlcNAc...) asparagine glycan. 4 helical membrane passes run 304 to 324, 332 to 352, 386 to 406, and 431 to 451; these read WSIV…YIAL, ILWF…YFSV, LYLS…VIVL, and VFFP…AIGV. Asn-488 and Asn-520 each carry an N-linked (GlcNAc...) asparagine glycan. Helical transmembrane passes span 542–562, 585–605, 626–648, 691–711, and 724–744; these read VFGF…VLAS, FFQT…ILAI, AVTR…FLKF, FLFF…TYYF, and IAVP…VFFG.

Belongs to the CTL (choline transporter-like) family.

It is found in the membrane. This chain is Choline transporter-like 2, found in Drosophila melanogaster (Fruit fly).